The chain runs to 163 residues: Acetolactate synthase isozyme 3 small subunit (163 aa).

Residues 4-78 (ILSVLLENES…DVLRVSELGQ (75 aa)) form the ACT domain.

Belongs to the acetolactate synthase small subunit family. Dimer of large and small chains.

The catalysed reaction is 2 pyruvate + H(+) = (2S)-2-acetolactate + CO2. Its pathway is amino-acid biosynthesis; L-isoleucine biosynthesis; L-isoleucine from 2-oxobutanoate: step 1/4. It functions in the pathway amino-acid biosynthesis; L-valine biosynthesis; L-valine from pyruvate: step 1/4. With respect to regulation, sensitive to valine inhibition. The chain is Acetolactate synthase isozyme 3 small subunit (ilvH) from Salmonella typhimurium (strain LT2 / SGSC1412 / ATCC 700720).